The chain runs to 147 residues: Nucleoside diphosphate kinase (147 aa).

Residues lysine 11, phenylalanine 59, arginine 87, threonine 93, arginine 104, and asparagine 114 each contribute to the ATP site. Histidine 117 (pros-phosphohistidine intermediate) is an active-site residue.

Belongs to the NDK family. In terms of assembly, homotetramer. Mg(2+) serves as cofactor.

The protein resides in the cytoplasm. The catalysed reaction is a 2'-deoxyribonucleoside 5'-diphosphate + ATP = a 2'-deoxyribonucleoside 5'-triphosphate + ADP. It catalyses the reaction a ribonucleoside 5'-diphosphate + ATP = a ribonucleoside 5'-triphosphate + ADP. Functionally, major role in the synthesis of nucleoside triphosphates other than ATP. The ATP gamma phosphate is transferred to the NDP beta phosphate via a ping-pong mechanism, using a phosphorylated active-site intermediate. This Anaeromyxobacter dehalogenans (strain 2CP-1 / ATCC BAA-258) protein is Nucleoside diphosphate kinase.